The chain runs to 280 residues: MSLVTSLTYVLPHRLLSSLARALAYSDRPATKQWLIDTVTRKFGVDLSEAQEPDPRAYPTFNAFFTRALKPGARVPDADPAALLMPADGRISQLGPIENGRIFQAKGQSFTAAELLGDEAAAAPFNDGLFATVYLSPKDYHRVHMPWTGTLRETVHVPGRLFSVGPDAVRNVPRLFARNERLVCHFDTDFGPMASVMVGALLVSGVETVWSGVEIPRYGDRITRKDYRGKGIVLEKFAEMARFNYGSTVIVLLPPGVARLDGRLAAETSVRLGQALARRQ.

Catalysis depends on charge relay system; for autoendoproteolytic cleavage activity residues D88, H144, and S247. Residue S247 is the Schiff-base intermediate with substrate; via pyruvic acid; for decarboxylase activity of the active site. S247 carries the pyruvic acid (Ser); by autocatalysis modification.

The protein belongs to the phosphatidylserine decarboxylase family. PSD-B subfamily. Prokaryotic type I sub-subfamily. Heterodimer of a large membrane-associated beta subunit and a small pyruvoyl-containing alpha subunit. It depends on pyruvate as a cofactor. Is synthesized initially as an inactive proenzyme. Formation of the active enzyme involves a self-maturation process in which the active site pyruvoyl group is generated from an internal serine residue via an autocatalytic post-translational modification. Two non-identical subunits are generated from the proenzyme in this reaction, and the pyruvate is formed at the N-terminus of the alpha chain, which is derived from the carboxyl end of the proenzyme. The autoendoproteolytic cleavage occurs by a canonical serine protease mechanism, in which the side chain hydroxyl group of the serine supplies its oxygen atom to form the C-terminus of the beta chain, while the remainder of the serine residue undergoes an oxidative deamination to produce ammonia and the pyruvoyl prosthetic group on the alpha chain. During this reaction, the Ser that is part of the protease active site of the proenzyme becomes the pyruvoyl prosthetic group, which constitutes an essential element of the active site of the mature decarboxylase.

It is found in the cell membrane. It catalyses the reaction a 1,2-diacyl-sn-glycero-3-phospho-L-serine + H(+) = a 1,2-diacyl-sn-glycero-3-phosphoethanolamine + CO2. It participates in phospholipid metabolism; phosphatidylethanolamine biosynthesis; phosphatidylethanolamine from CDP-diacylglycerol: step 2/2. Its function is as follows. Catalyzes the formation of phosphatidylethanolamine (PtdEtn) from phosphatidylserine (PtdSer). In Xanthomonas euvesicatoria pv. vesicatoria (strain 85-10) (Xanthomonas campestris pv. vesicatoria), this protein is Phosphatidylserine decarboxylase proenzyme.